Reading from the N-terminus, the 958-residue chain is Glycine dehydrogenase (decarboxylating) (958 aa).

Residue K703 is modified to N6-(pyridoxal phosphate)lysine.

It belongs to the GcvP family. In terms of assembly, the glycine cleavage system is composed of four proteins: P, T, L and H. The cofactor is pyridoxal 5'-phosphate.

The enzyme catalyses N(6)-[(R)-lipoyl]-L-lysyl-[glycine-cleavage complex H protein] + glycine + H(+) = N(6)-[(R)-S(8)-aminomethyldihydrolipoyl]-L-lysyl-[glycine-cleavage complex H protein] + CO2. In terms of biological role, the glycine cleavage system catalyzes the degradation of glycine. The P protein binds the alpha-amino group of glycine through its pyridoxal phosphate cofactor; CO(2) is released and the remaining methylamine moiety is then transferred to the lipoamide cofactor of the H protein. The chain is Glycine dehydrogenase (decarboxylating) from Nitrobacter hamburgensis (strain DSM 10229 / NCIMB 13809 / X14).